Reading from the N-terminus, the 1416-residue chain is DNA-directed RNA polymerase subunit beta (1416 aa).

This sequence belongs to the RNA polymerase beta chain family. As to quaternary structure, in plastids the minimal PEP RNA polymerase catalytic core is composed of four subunits: alpha, beta, beta', and beta''. When a (nuclear-encoded) sigma factor is associated with the core the holoenzyme is formed, which can initiate transcription.

The protein localises to the plastid. Its subcellular location is the chloroplast. It catalyses the reaction RNA(n) + a ribonucleoside 5'-triphosphate = RNA(n+1) + diphosphate. In terms of biological role, DNA-dependent RNA polymerase catalyzes the transcription of DNA into RNA using the four ribonucleoside triphosphates as substrates. The protein is DNA-directed RNA polymerase subunit beta of Oltmannsiellopsis viridis (Marine flagellate).